The sequence spans 300 residues: Formamidopyrimidine-DNA glycosylase (300 aa).

Proline 2 serves as the catalytic Schiff-base intermediate with DNA. The Proton donor role is filled by glutamate 3. Lysine 60 (proton donor; for beta-elimination activity) is an active-site residue. Positions 108, 136, and 181 each coordinate DNA. The FPG-type zinc-finger motif lies at 266 to 300 (WVYSRAGQPCRICNTPLEKIKLAGRSTHFCPQCQK). The Proton donor; for delta-elimination activity role is filled by arginine 290.

It belongs to the FPG family. In terms of assembly, monomer. The cofactor is Zn(2+).

It catalyses the reaction Hydrolysis of DNA containing ring-opened 7-methylguanine residues, releasing 2,6-diamino-4-hydroxy-5-(N-methyl)formamidopyrimidine.. It carries out the reaction 2'-deoxyribonucleotide-(2'-deoxyribose 5'-phosphate)-2'-deoxyribonucleotide-DNA = a 3'-end 2'-deoxyribonucleotide-(2,3-dehydro-2,3-deoxyribose 5'-phosphate)-DNA + a 5'-end 5'-phospho-2'-deoxyribonucleoside-DNA + H(+). In terms of biological role, involved in base excision repair of DNA damaged by oxidation or by mutagenic agents. Acts as a DNA glycosylase that recognizes and removes damaged bases. Has a preference for oxidized purines, such as 7,8-dihydro-8-oxoguanine (8-oxoG). Has AP (apurinic/apyrimidinic) lyase activity and introduces nicks in the DNA strand. Cleaves the DNA backbone by beta-delta elimination to generate a single-strand break at the site of the removed base with both 3'- and 5'-phosphates. This Trichodesmium erythraeum (strain IMS101) protein is Formamidopyrimidine-DNA glycosylase.